The sequence spans 793 residues: MPFSKAWRSAVYPDFREQGAYINYKATKDTLHRMKEDIANPATPDELYNSLLMQKATVYKWCENKVKELQMMAEALMKASDYLSEEETPTNMSMVFSMVGSSEAKYLPPSDARRVADAITYELLRFVECRNLNTDTIEHIIARMYRYAVLGPTGDRWKNINKEYDYHALSIDEIFFMLSKVYEHVNEVESMRRDGRSSIPCGTVGSQVFDRRSVKYWVHMQDLPFVIARIIPHLPLSTFQDTYAMSKERGVPFTLGSPISSVYYDNDKFLLYHRRLERLDGATLIRMRWYGRPLDSDWNKLESKDSVFMEIKVHHEAWSGERSNKRRFALKEKDVDAYIRGDLSLKPALEKLRSKNASEAEQEKFMSLATEILTKIHAYDLKPVLRTQCQRAAFQCGLDQSIRISIDTDLRVVAEDFGLSHHWRYNGADAPLSHFPYAVVEVKLQCAENERIAPWIEELMNCRYMESVPKFSKYAHGIATLYGHTPFIKMVPYWMPQLDIDIRASTKPEYNQWDPTIGIASGCWERTTDRVIFGTGHAQTQTVGASEARFLPRTDCLRTYQRVLKAIKRGAHMNSVAPTMSPTDRPPSDEKKLTEQQELAPVVQYDTDRRHKAYTAFHLYPYCEDGVESLCFTSTGGKHVAAEVFSGLIPWQTGKRIRVPQKYDPKTLLTSERFMVKWAEQATRVGVVGLAVIRFGNSMSLPNDMVAVHSFWRANFHIVLGSLMVVVAECVLVYAYVTFKSRSRRVYARRKIRYDDRRGPVALTFVILAVILITVMMHVMVRYGPMLTGSDTF.

Over 1-684 (MPFSKAWRSA…MVKWAEQATR (684 aa)) the chain is Cytoplasmic. 6 residues coordinate ATP: Lys215, Arg286, Arg288, Lys312, Lys325, and Arg391. Mn(2+) is bound at residue Glu441. Residue Lys473 is part of the active site. The interval 575–595 (SVAPTMSPTDRPPSDEKKLTE) is disordered. Basic and acidic residues predominate over residues 586–595 (PPSDEKKLTE). A helical membrane pass occupies residues 685 to 705 (VGVVGLAVIRFGNSMSLPNDM). The Vacuolar portion of the chain corresponds to 706-717 (VAVHSFWRANFH). Residues 718–738 (IVLGSLMVVVAECVLVYAYVT) form a helical membrane-spanning segment. The Cytoplasmic segment spans residues 739–760 (FKSRSRRVYARRKIRYDDRRGP). A helical membrane pass occupies residues 761 to 781 (VALTFVILAVILITVMMHVMV). At 782–793 (RYGPMLTGSDTF) the chain is on the vacuolar side.

This sequence belongs to the VTC4 family. As to quaternary structure, the VTC core complex is an integral membrane heterooligomer composed of at least the catalytic subunit vtc4 and the accessory subunits vtc1 and vtc2. vtc1 is a small membrane protein without hydrophilic domain. Vtc2 and vtc4 are related and have 2 hydrophilic domains that face the cytosol, an N-terminal SPX domain and the central core domain. The central core in vtc4 is the catalytic domain. Mn(2+) is required as a cofactor.

It is found in the acidocalcisome membrane. It catalyses the reaction [phosphate](n) + ATP = [phosphate](n+1) + ADP. With respect to regulation, activity of the enzyme is Mn(2+)-dependent and enhanced in the presence of pyrophosphate (PPi). Functionally, component of a polyphosphate synthase complex that utilizes ATP to synthesize and translocate polyphosphate to acidocalcisomes in epimastigotes, insect-stages of Trypanosoma brucei. Catalytic subunit of the vacuolar transporter chaperone (VTC) complex. The VTC complex acts as a vacuolar polyphosphate polymerase that catalyzes the synthesis of inorganic polyphosphate (polyP) via transfer of phosphate from ATP to a growing polyP chain, releasing ADP. VTC exposes its catalytic domain vtc4 to the cytosol, where the growing polyP chain winds through a tunnel-shaped pocket, integrating cytoplasmic polymer synthesis with polyP membrane translocation. The VTC complex carries 9 vacuolar transmembrane domains, which are likely to constitute the translocation channel into the organelle lumen. PolyP synthesis is tightly coupled to its transport into the vacuole lumen, in order to avoid otherwise toxic intermediates in the cytosol, and it depends on the proton gradient across the membrane, formed by V-ATPase. The VTC complex also plays a role in vacuolar membrane fusion. Essential for infection and parasite survival in the mammalian host. The chain is Vacuolar transporter chaperone complex subunit 4 (vtc4) from Trypanosoma brucei brucei (strain 927/4 GUTat10.1).